A 341-amino-acid polypeptide reads, in one-letter code: Ferredoxin--NADP reductase 2 (341 aa).

Residues Asp-42, Gln-50, Tyr-55, Ile-95, Phe-129, Asp-294, and Ser-335 each contribute to the FAD site.

This sequence belongs to the ferredoxin--NADP reductase type 2 family. In terms of assembly, homodimer. The cofactor is FAD.

It catalyses the reaction 2 reduced [2Fe-2S]-[ferredoxin] + NADP(+) + H(+) = 2 oxidized [2Fe-2S]-[ferredoxin] + NADPH. This chain is Ferredoxin--NADP reductase 2, found in Chloroherpeton thalassium (strain ATCC 35110 / GB-78).